The following is a 471-amino-acid chain: Regulator of microtubule dynamics protein 3 (471 aa).

Residues 1–9 lie on the Mitochondrial intermembrane side of the membrane; that stretch reads MSSLGTLGG. The chain crosses the membrane as a helical span at residues 10–32; the sequence is ARAGLGLLLGTAAGLGFLCALYS. The Cytoplasmic segment spans residues 33-471; the sequence is QRWKRTQRRG…LEELEVILGE (439 aa). The segment at 39 to 70 is disordered; the sequence is QRRGQSQSQSNSLDYTQTSEPGRQVRPLRAAP. The segment covering 41-50 has biased composition (low complexity); that stretch reads RGQSQSQSNS. Ser-44, Ser-46, Ser-50, and Ser-57 each carry phosphoserine. Residues 90 to 123 adopt a coiled-coil conformation; sequence LDRLEFVLTSLVALRREVEELRSSLQGLAGQIVG. An FFAT motif is present at residues 156-162; the sequence is VYFTAAS. Thr-159 carries the phosphothreonine modification. The tract at residues 169–206 is disordered; it reads AESEGGYTTANAESDYERDSERESDGDGEDEVSCETVK. 4 positions are modified to phosphoserine: Ser-182, Ser-192, Ser-212, and Ser-233. The span at 183–193 shows a compositional bias: basic and acidic residues; sequence DYERDSERESD.

The protein belongs to the RMDN family. In terms of assembly, interacts with PTPN2. Interacts with microtubules. Interacts with VAPB. Interacts (via FFAT motif) with MOSPD2 (via MSP domain). Interacts (via phosphorylated FFAT motif) with MOSPD2, VAPA and VAPB. In terms of processing, phosphorylation at Thr-160 of the FFAT motif activates interaction with MOSPD2, VAPA and VAPB.

The protein localises to the mitochondrion outer membrane. It localises to the cytoplasm. The protein resides in the nucleus. It is found in the cytoskeleton. Its subcellular location is the spindle. The protein localises to the spindle pole. Involved in cellular calcium homeostasis regulation. May participate in differentiation and apoptosis of keratinocytes. Overexpression induces apoptosis. This is Regulator of microtubule dynamics protein 3 from Bos taurus (Bovine).